The sequence spans 373 residues: XK-related protein 9 (373 aa).

The next 8 helical transmembrane spans lie at 8-28, 38-58, 166-186, 203-223, 224-244, 256-276, 295-315, and 318-338; these read FMMSVLGIIIYVTDLIVDIWV, YVFSALALSFMLFGTLVAQCF, AAIMVSCCAISWSTVDYQVAL, ITYLFYKLFTLLSWMLSVVLL, LFLNVKIALFLLLFLWLLGII, CISMEFLYRIVVGFILIFTFF, VLGTLGILTVFWVCPLTIFNP, and FIPISITIVLTLLLGILFLIV.

Belongs to the XK family. In terms of processing, undergoes proteolytic processing by caspase-3 (CASP3), caspase-6 (CASP6) and caspase-7 (CASP7) to generate the XK-related protein 9, processed form, leading to its activation.

Its subcellular location is the cell membrane. The enzyme catalyses a 1,2-diacyl-sn-glycero-3-phospho-L-serine(in) = a 1,2-diacyl-sn-glycero-3-phospho-L-serine(out). With respect to regulation, activated upon caspase cleavage to generate the XK-related protein 9, processed form. Does not act prior the onset of apoptosis. Functionally, phospholipid scramblase that promotes phosphatidylserine exposure on apoptotic cell surface. Phosphatidylserine is a specific marker only present at the surface of apoptotic cells and acts as a specific signal for engulfment. In Homo sapiens (Human), this protein is XK-related protein 9.